Reading from the N-terminus, the 118-residue chain is Large ribosomal subunit protein bL19 (118 aa).

Belongs to the bacterial ribosomal protein bL19 family.

This protein is located at the 30S-50S ribosomal subunit interface and may play a role in the structure and function of the aminoacyl-tRNA binding site. This chain is Large ribosomal subunit protein bL19, found in Helicobacter pylori (strain HPAG1).